The primary structure comprises 579 residues: Aspartate--tRNA(Asp/Asn) ligase (579 aa).

Position 169 (E169) interacts with L-aspartate. The segment at 193-196 is aspartate; that stretch reads QLFK. Position 215 (R215) interacts with L-aspartate. ATP contacts are provided by residues 215–217 and Q224; that span reads RDE. H437 lines the L-aspartate pocket. An ATP-binding site is contributed by E471. R478 is a binding site for L-aspartate. An ATP-binding site is contributed by 523-526; it reads GWDR. The segment at 551-579 is disordered; it reads DPLTGAPTPITAEQRREAGVDAVPEQATS.

Belongs to the class-II aminoacyl-tRNA synthetase family. Type 1 subfamily. Homodimer.

It localises to the cytoplasm. The enzyme catalyses tRNA(Asx) + L-aspartate + ATP = L-aspartyl-tRNA(Asx) + AMP + diphosphate. Functionally, aspartyl-tRNA synthetase with relaxed tRNA specificity since it is able to aspartylate not only its cognate tRNA(Asp) but also tRNA(Asn). Reaction proceeds in two steps: L-aspartate is first activated by ATP to form Asp-AMP and then transferred to the acceptor end of tRNA(Asp/Asn). The sequence is that of Aspartate--tRNA(Asp/Asn) ligase from Thermobifida fusca (strain YX).